Consider the following 105-residue polypeptide: Thiosulfate sulfurtransferase GlpE (105 aa).

The Rhodanese domain occupies 15 to 103 (MQQGAILVDI…WCRAELPIDT (89 aa)). Cys-63 serves as the catalytic Cysteine persulfide intermediate.

The protein belongs to the GlpE family.

The protein localises to the cytoplasm. The catalysed reaction is thiosulfate + hydrogen cyanide = thiocyanate + sulfite + 2 H(+). The enzyme catalyses thiosulfate + [thioredoxin]-dithiol = [thioredoxin]-disulfide + hydrogen sulfide + sulfite + 2 H(+). Functionally, transferase that catalyzes the transfer of sulfur from thiosulfate to thiophilic acceptors such as cyanide or dithiols. May function in a CysM-independent thiosulfate assimilation pathway by catalyzing the conversion of thiosulfate to sulfite, which can then be used for L-cysteine biosynthesis. In Haemophilus influenzae (strain PittEE), this protein is Thiosulfate sulfurtransferase GlpE.